Reading from the N-terminus, the 161-residue chain is SsrA-binding protein (161 aa).

The interval Asp-138–Arg-161 is disordered. Over residues Lys-139–Arg-154 the composition is skewed to basic and acidic residues.

It belongs to the SmpB family.

It localises to the cytoplasm. In terms of biological role, required for rescue of stalled ribosomes mediated by trans-translation. Binds to transfer-messenger RNA (tmRNA), required for stable association of tmRNA with ribosomes. tmRNA and SmpB together mimic tRNA shape, replacing the anticodon stem-loop with SmpB. tmRNA is encoded by the ssrA gene; the 2 termini fold to resemble tRNA(Ala) and it encodes a 'tag peptide', a short internal open reading frame. During trans-translation Ala-aminoacylated tmRNA acts like a tRNA, entering the A-site of stalled ribosomes, displacing the stalled mRNA. The ribosome then switches to translate the ORF on the tmRNA; the nascent peptide is terminated with the 'tag peptide' encoded by the tmRNA and targeted for degradation. The ribosome is freed to recommence translation, which seems to be the essential function of trans-translation. In Aliivibrio fischeri (strain ATCC 700601 / ES114) (Vibrio fischeri), this protein is SsrA-binding protein.